A 299-amino-acid polypeptide reads, in one-letter code: ATP phosphoribosyltransferase (299 aa).

This sequence belongs to the ATP phosphoribosyltransferase family. Long subfamily. Equilibrium between an active dimeric form, an inactive hexameric form and higher aggregates. Interconversion between the various forms is largely reversible and is influenced by the natural substrates and inhibitors of the enzyme. Requires Mg(2+) as cofactor.

The protein localises to the cytoplasm. The catalysed reaction is 1-(5-phospho-beta-D-ribosyl)-ATP + diphosphate = 5-phospho-alpha-D-ribose 1-diphosphate + ATP. Its pathway is amino-acid biosynthesis; L-histidine biosynthesis; L-histidine from 5-phospho-alpha-D-ribose 1-diphosphate: step 1/9. Feedback inhibited by histidine. Its function is as follows. Catalyzes the condensation of ATP and 5-phosphoribose 1-diphosphate to form N'-(5'-phosphoribosyl)-ATP (PR-ATP). Has a crucial role in the pathway because the rate of histidine biosynthesis seems to be controlled primarily by regulation of HisG enzymatic activity. In Proteus mirabilis (strain HI4320), this protein is ATP phosphoribosyltransferase.